A 154-amino-acid polypeptide reads, in one-letter code: Ubiquitin-like protein 4A-A (154 aa).

The 76-residue stretch at M1 to E76 folds into the Ubiquitin-like domain.

As to quaternary structure, component of the BAT3 complex.

The protein resides in the cytoplasm. It localises to the cytosol. Functionally, component of the BAT3 complex, a multiprotein complex involved in the post-translational delivery of tail-anchored (TA) membrane proteins to the endoplasmic reticulum membrane. TA membrane proteins, also named type II transmembrane proteins, contain a single C-terminal transmembrane region. This Oncorhynchus mykiss (Rainbow trout) protein is Ubiquitin-like protein 4A-A (ubl4aa).